A 347-amino-acid chain; its full sequence is Histone deacetylase 11 (347 aa).

The interval threonine 14–glycine 326 is histone deacetylase. Histidine 143 is an active-site residue.

Belongs to the histone deacetylase family. As to quaternary structure, interacts with HDAC6. As to expression, weakly expressed in most tissues. Strongly expressed in brain, heart, skeletal muscle, kidney and testis.

It localises to the nucleus. The enzyme catalyses N(6)-acetyl-L-lysyl-[histone] + H2O = L-lysyl-[histone] + acetate. Responsible for the deacetylation of lysine residues on the N-terminal part of the core histones (H2A, H2B, H3 and H4). Histone deacetylation gives a tag for epigenetic repression and plays an important role in transcriptional regulation, cell cycle progression and developmental events. Histone deacetylases act via the formation of large multiprotein complexes. This chain is Histone deacetylase 11 (HDAC11), found in Homo sapiens (Human).